The following is a 273-amino-acid chain: 2-dehydro-3-deoxyphosphooctonate aldolase (273 aa).

It belongs to the KdsA family.

Its subcellular location is the cytoplasm. The catalysed reaction is D-arabinose 5-phosphate + phosphoenolpyruvate + H2O = 3-deoxy-alpha-D-manno-2-octulosonate-8-phosphate + phosphate. It participates in carbohydrate biosynthesis; 3-deoxy-D-manno-octulosonate biosynthesis; 3-deoxy-D-manno-octulosonate from D-ribulose 5-phosphate: step 2/3. It functions in the pathway bacterial outer membrane biogenesis; lipopolysaccharide biosynthesis. This Desulfatibacillum aliphaticivorans protein is 2-dehydro-3-deoxyphosphooctonate aldolase.